A 363-amino-acid polypeptide reads, in one-letter code: NADH-quinone oxidoreductase subunit H (363 aa).

The next 10 helical transmembrane spans lie at Val29 to Trp49, Gly62 to Phe82, Ala94 to Val114, Val127 to Gly147, Val166 to Ser186, Phe202 to Val222, Ile239 to Leu257, Ile264 to Val286, Leu293 to Ala313, and Phe339 to Ile359.

The protein belongs to the complex I subunit 1 family. As to quaternary structure, NDH-1 is composed of 14 different subunits. Subunits NuoA, H, J, K, L, M, N constitute the membrane sector of the complex.

Its subcellular location is the cell inner membrane. The catalysed reaction is a quinone + NADH + 5 H(+)(in) = a quinol + NAD(+) + 4 H(+)(out). Functionally, NDH-1 shuttles electrons from NADH, via FMN and iron-sulfur (Fe-S) centers, to quinones in the respiratory chain. The immediate electron acceptor for the enzyme in this species is believed to be ubiquinone. Couples the redox reaction to proton translocation (for every two electrons transferred, four hydrogen ions are translocated across the cytoplasmic membrane), and thus conserves the redox energy in a proton gradient. This subunit may bind ubiquinone. In Xylella fastidiosa (strain Temecula1 / ATCC 700964), this protein is NADH-quinone oxidoreductase subunit H.